Here is a 415-residue protein sequence, read N- to C-terminus: Amino acid decarboxylase lolD2 (415 aa).

At lysine 62 the chain carries N6-(pyridoxal phosphate)lysine. Pyridoxal 5'-phosphate-binding positions include serine 194, glycine 231, and 266–269 (EPGT). 315 to 316 (IV) is a binding site for substrate. Cysteine 351 functions as the Proton donor; shared with dimeric partner in the catalytic mechanism. Cysteine 351 is subject to S-nitrosocysteine. Residue aspartate 352 participates in substrate binding. Tyrosine 381 is a binding site for pyridoxal 5'-phosphate.

Belongs to the Orn/Lys/Arg decarboxylase class-II family. Homodimer. Pyridoxal 5'-phosphate is required as a cofactor.

Its pathway is alkaloid biosynthesis. Functionally, amino acid decarboxylase; part of the gene cluster that mediates the biosynthesis of loline alkaloids, potent insecticidal agents composed of a pyrrolizidine ring system and an uncommon ether bridge linking carbons 2 and 7. Lolines are structurally differentiated by the various modifications of the L-amino group and include norloline, loline, N-methylloline, N-acetylloline, N-acetylnorloline, and N-formylloline. The first committed step is the condensation of O-acetyl-L-homoserine (derived from L-aspartic acid) and L-proline, probably catalyzed by the gamma-type pyridoxal 5'-phosphate(PLP)-dependent enzyme lolC, to give the diamino diacid, NACPP. Ensuing cyclization, decarboxylation, and acetylation steps yield 1-exo-acetamidopyrrolizidine (AcAP). LolO is required for installation of the ether bridge upon the pathway intermediate, 1-exo-acetamidopyrrolizidine (AcAP). In sequential 2-oxoglutarate- and O(2)-consuming steps, lolO removes hydrogens from C2 and C7 of AcAP to form both carbon-oxygen bonds in N-acetylnorloline (NANL), the precursor to all other lolines. The enzymes lolD, lolE, lolF and lolT have also been proposed to be involved in the ether-bridge installation. Further processing of the exocyclic moiety of NANL by fungal N-acetamidase (LolN), methyltransferase (LolM), and cytochrome P450 (LolP) enzymes, with occasional involvement of a plant acetyltransferase, generates the other known lolines. LolN transforms NANL to norlonine which is monomethylated and dimethylated to respectively lonine and N-methyllonine (NML) by lolM. LolP catalyzes hydroxylation of the methyl group in N-methylloline (NML) and further oxygenation to N-formylloline (NFL). A plant acetyltransferase is responsible for the acetylation of loline to form N-acetylloline (NAL). LolA might interact with aspartate kinase to prevent feedback inhibition of its activity by these end products and thereby promote production of L-homoserine from L-aspartate. The chain is Amino acid decarboxylase lolD2 from Epichloe uncinata (Endophyte fungus).